The following is a 301-amino-acid chain: Ribonuclease Z (301 aa).

7 residues coordinate Zn(2+): histidine 63, histidine 65, aspartate 67, histidine 68, histidine 141, aspartate 204, and histidine 262. The Proton acceptor role is filled by aspartate 67.

It belongs to the RNase Z family. In terms of assembly, homodimer. Zn(2+) is required as a cofactor.

It catalyses the reaction Endonucleolytic cleavage of RNA, removing extra 3' nucleotides from tRNA precursor, generating 3' termini of tRNAs. A 3'-hydroxy group is left at the tRNA terminus and a 5'-phosphoryl group is left at the trailer molecule.. Zinc phosphodiesterase, which displays some tRNA 3'-processing endonuclease activity. Probably involved in tRNA maturation, by removing a 3'-trailer from precursor tRNA. This chain is Ribonuclease Z, found in Streptomyces avermitilis (strain ATCC 31267 / DSM 46492 / JCM 5070 / NBRC 14893 / NCIMB 12804 / NRRL 8165 / MA-4680).